The following is a 103-amino-acid chain: Large ribosomal subunit protein bL21 (103 aa).

It belongs to the bacterial ribosomal protein bL21 family. Part of the 50S ribosomal subunit. Contacts protein L20.

In terms of biological role, this protein binds to 23S rRNA in the presence of protein L20. This Vibrio parahaemolyticus serotype O3:K6 (strain RIMD 2210633) protein is Large ribosomal subunit protein bL21.